Here is a 269-residue protein sequence, read N- to C-terminus: Regulating synaptic membrane exocytosis protein 4 (269 aa).

In terms of domain architecture, C2 spans 115 to 233 (PMGDVEIGLQ…DLTTLAVGWY (119 aa)). Phosphoserine is present on residues Ser254 and Ser257.

In terms of assembly, binds PPFIA3. Does not bind RAB3.

The protein localises to the synapse. Regulates synaptic membrane exocytosis. The sequence is that of Regulating synaptic membrane exocytosis protein 4 (Rims4) from Mus musculus (Mouse).